Consider the following 201-residue polypeptide: Ribonuclease HII (201 aa).

Residues 14-201 (NLIAGVDEVG…KPVKRILGIE (188 aa)) enclose the RNase H type-2 domain. A divalent metal cation is bound by residues Asp20, Glu21, and Asp112.

This sequence belongs to the RNase HII family. The cofactor is Mn(2+). It depends on Mg(2+) as a cofactor.

The protein localises to the cytoplasm. The enzyme catalyses Endonucleolytic cleavage to 5'-phosphomonoester.. In terms of biological role, endonuclease that specifically degrades the RNA of RNA-DNA hybrids. The protein is Ribonuclease HII of Photobacterium profundum (strain SS9).